A 222-amino-acid polypeptide reads, in one-letter code: DnaJ homolog subfamily B member 9 (222 aa).

An N-terminal signal peptide occupies residues 1-23 (MATPQSVFVFAICILMITELILA). The J domain maps to 26–90 (NYYDILGVPK…NRRKEYDIIG (65 aa)). Residues 91 to 222 (HSAFTNGKGQ…VTTYTDCSGQ (132 aa)) are divergent targeting domain. S133 is subject to Phosphoserine.

As to quaternary structure, interacts with HSPA5/BiP; interaction is direct. Interacts with ERN1/IRE1 (via the luminal region). Interacts with DERL1.

The protein resides in the endoplasmic reticulum lumen. Functionally, co-chaperone for Hsp70 protein HSPA5/BiP that acts as a key repressor of the ERN1/IRE1-mediated unfolded protein response (UPR). J domain-containing co-chaperones stimulate the ATPase activity of Hsp70 proteins and are required for efficient substrate recognition by Hsp70 proteins. In the unstressed endoplasmic reticulum, interacts with the luminal region of ERN1/IRE1 and selectively recruits HSPA5/BiP: HSPA5/BiP disrupts the dimerization of the active ERN1/IRE1 luminal region, thereby inactivating ERN1/IRE1. Also involved in endoplasmic reticulum-associated degradation (ERAD) of misfolded proteins. Required for survival of B-cell progenitors and normal antibody production. This chain is DnaJ homolog subfamily B member 9, found in Rattus norvegicus (Rat).